Reading from the N-terminus, the 502-residue chain is Histidine--tRNA ligase (502 aa).

The protein belongs to the class-II aminoacyl-tRNA synthetase family. As to quaternary structure, homodimer.

Its subcellular location is the cytoplasm. It catalyses the reaction tRNA(His) + L-histidine + ATP = L-histidyl-tRNA(His) + AMP + diphosphate + H(+). The protein is Histidine--tRNA ligase of Brucella abortus (strain S19).